The primary structure comprises 119 residues: Large ribosomal subunit protein uL18 (119 aa).

Belongs to the universal ribosomal protein uL18 family. In terms of assembly, part of the 50S ribosomal subunit; part of the 5S rRNA/L5/L18/L25 subcomplex. Contacts the 5S and 23S rRNAs.

This is one of the proteins that bind and probably mediate the attachment of the 5S RNA into the large ribosomal subunit, where it forms part of the central protuberance. The sequence is that of Large ribosomal subunit protein uL18 from Xylella fastidiosa (strain M23).